The primary structure comprises 216 residues: Probable nicotinate-nucleotide adenylyltransferase (216 aa).

It belongs to the NadD family.

The enzyme catalyses nicotinate beta-D-ribonucleotide + ATP + H(+) = deamido-NAD(+) + diphosphate. Its pathway is cofactor biosynthesis; NAD(+) biosynthesis; deamido-NAD(+) from nicotinate D-ribonucleotide: step 1/1. Catalyzes the reversible adenylation of nicotinate mononucleotide (NaMN) to nicotinic acid adenine dinucleotide (NaAD). The chain is Probable nicotinate-nucleotide adenylyltransferase from Geobacter sulfurreducens (strain ATCC 51573 / DSM 12127 / PCA).